The sequence spans 342 residues: N-acetyl-gamma-glutamyl-phosphate reductase (342 aa).

The active site involves Cys-149.

This sequence belongs to the NAGSA dehydrogenase family. Type 1 subfamily.

It is found in the cytoplasm. It carries out the reaction N-acetyl-L-glutamate 5-semialdehyde + phosphate + NADP(+) = N-acetyl-L-glutamyl 5-phosphate + NADPH + H(+). The protein operates within amino-acid biosynthesis; L-arginine biosynthesis; N(2)-acetyl-L-ornithine from L-glutamate: step 3/4. Its function is as follows. Catalyzes the NADPH-dependent reduction of N-acetyl-5-glutamyl phosphate to yield N-acetyl-L-glutamate 5-semialdehyde. This chain is N-acetyl-gamma-glutamyl-phosphate reductase, found in Cereibacter sphaeroides (strain ATCC 17029 / ATH 2.4.9) (Rhodobacter sphaeroides).